A 494-amino-acid polypeptide reads, in one-letter code: MSSEDSLKSLSLDYLNLLINGQAFSDVAFSVEGRLVHAHRCVLAARSLFFRKLFCGLDPNHQPPPPPPPPLNWPTAGGGGGGSGGGGRGGAGGGGGAPATPELVIPVSSIRYEVLVLVLQFLYSGQASVAAPKSGPLPGCGARGCWHTRCGAAVDLALDTLAAARSFGVEQLALLVQKQLESMVKEASVDDVMKVLMASRKFEMQELWATCSHLVARSGLSADLLAKHLPIDVVAKIEEIRAKSPLAAAAAPRSPFLTHHYLPMNPASSAADRDNKIRRMRRALDAADIELVKLMVMGEGLDLDDALAVHYAVQHCNRDVVKALLELGAADVNSRAGPTGKTALHLAAEMVSPDMVSVLLDHHADPNSRTLDGVTPLDVLRSLTSEFLFKGAVPGLTHIEPNKLRLCLELVQSAVMVTTRDDGAPVTGGEAGGSDGGNFPRSDADDSLVSLTMNSTLMYQGQEMAAAVAAGEGRKSNNGRGSPPPAMYFPNGFA.

One can recognise a BTB domain in the interval 25 to 131; that stretch reads SDVAFSVEGR…LYSGQASVAA (107 aa). Residues 60 to 95 are disordered; the sequence is NHQPPPPPPPPLNWPTAGGGGGGSGGGGRGGAGGGG. The segment covering 61 to 72 has biased composition (pro residues); it reads HQPPPPPPPPLN. Residues 76–95 are compositionally biased toward gly residues; that stretch reads AGGGGGGSGGGGRGGAGGGG. The C2HC NPR-type zinc finger occupies 137 to 151; it reads LPGCGARGCWHTRCG. The Zn(2+) site is built by C140, C145, H147, and C150. 4 ANK repeats span residues 275–303, 304–334, 339–368, and 372–406; these read NKIR…GLDL, DDAL…DVNS, TGKT…DPNS, and DGVT…KLRL. Disordered stretches follow at residues 421-443 and 471-494; these read DDGA…PRSD and GEGR…NGFA.

This sequence belongs to the plant 'ANKYRIN-BTB/POZ' family. 'NOOT-BOP-COCH-like' (NBCL) subfamily. As to quaternary structure, homodimer. Interacts with TGAL5, TGAL7, TGAL8 and TGAL9.

The protein resides in the nucleus. The protein localises to the cytoplasm. The protein operates within protein modification; protein ubiquitination. Functionally, may act as a substrate-specific adapter of an E3 ubiquitin-protein ligase complex (CUL3-RBX1-BTB) which mediates the ubiquitination and subsequent proteasomal degradation of target proteins. Transcriptional co-regulator involved in the promotion of leaf and floral meristem fate and determinacy. Required for the abscission of senescent organs, probably by regulating the cell wall disorganization in abscission zones (AZs, e.g. pulvini at the base of leaves). This Oryza sativa subsp. japonica (Rice) protein is BTB/POZ domain and ankyrin repeat-containing protein NH5.2.